The chain runs to 142 residues: ER-derived vesicles protein ERV15 (142 aa).

Residues 1–7 (MSGTGLS) lie on the Cytoplasmic side of the membrane. A helical membrane pass occupies residues 8–28 (LFVTGLILNCLNSICQIYFTI). The Extracellular segment spans residues 29 to 55 (LYGDLEADYINSIELCKRVNRLSVPEA). A helical membrane pass occupies residues 56-76 (ILQAFISALFLFNGYWFVFLL). The Cytoplasmic portion of the chain corresponds to 77-114 (NVPVLAYNASKVYKKTHLLDATDIFRKLGRCKIECFLK). Residues 115 to 135 (LGFYLLIFFFYFYRMVTALLE) traverse the membrane as a helical segment. The Extracellular segment spans residues 136-142 (NDANLIS).

Belongs to the cornichon family.

It localises to the membrane. The polypeptide is ER-derived vesicles protein ERV15 (ERV15) (Saccharomyces cerevisiae (strain ATCC 204508 / S288c) (Baker's yeast)).